A 1198-amino-acid polypeptide reads, in one-letter code: DNA polymerase (1198 aa).

Disordered regions lie at residues 1–90 (MALV…TVVA), 179–198 (LEQPDGQGQAAEVEDHQPNP), and 906–931 (ALADSDAEESEDERAPTPFYSPPSGT). Low complexity predominate over residues 30–40 (QQPPRAAPAPA).

Belongs to the DNA polymerase type-B family. As to quaternary structure, heterodimer with the terminal protein; this heterodimer binds to bp 9 to 18 of the genome. Forms a complex with viral pTP, DBP and hosts NFIA and POU2F1/OCT1 for initiation of replication.

The protein resides in the host nucleus. The catalysed reaction is DNA(n) + a 2'-deoxyribonucleoside 5'-triphosphate = DNA(n+1) + diphosphate. Functionally, eukaryotic-type DNA polymerase involved in viral genomic replication. DNA synthesis is protein primed, and acts in a strand displacement replication. Assembles in complex with viral pTP, DBP, host NFIA and host POU2F1/OCT1 on viral origin of replication. The polymerase covalently transfers dCMP onto pTP, thereby initiating complementary strand synthesis. This Homo sapiens (Human) protein is DNA polymerase.